Reading from the N-terminus, the 106-residue chain is ATP-dependent Clp protease adapter protein ClpS (106 aa).

Belongs to the ClpS family. In terms of assembly, binds to the N-terminal domain of the chaperone ClpA.

Its function is as follows. Involved in the modulation of the specificity of the ClpAP-mediated ATP-dependent protein degradation. This chain is ATP-dependent Clp protease adapter protein ClpS, found in Vibrio vulnificus (strain CMCP6).